A 79-amino-acid chain; its full sequence is Small ribosomal subunit protein bS18c (79 aa).

It belongs to the bacterial ribosomal protein bS18 family. Part of the 30S ribosomal subunit.

It is found in the plastid. The protein resides in the chloroplast. This chain is Small ribosomal subunit protein bS18c, found in Chaetosphaeridium globosum (Charophycean green alga).